Here is an 85-residue protein sequence, read N- to C-terminus: U4-theraphotoxin-Hhn1a (85 aa).

The N-terminal stretch at 1–22 (MKVTLIAILTCAAVLVLRTTAA) is a signal peptide. The propeptide occupies 23–48 (EELEAESQLMEVGMPDTELAAVDEER). Disulfide bonds link C52-C66, C56-C77, and C71-C82.

The protein belongs to the neurotoxin 12 (Hwtx-2) family. 02 (Hwtx-2) subfamily. Monomer. As to expression, expressed by the venom gland.

The protein localises to the secreted. Its function is as follows. Neurotoxin active on both insects and mammals. This Cyriopagopus hainanus (Chinese bird spider) protein is U4-theraphotoxin-Hhn1a.